The following is a 239-amino-acid chain: Small ribosomal subunit protein uS2 (239 aa).

This sequence belongs to the universal ribosomal protein uS2 family.

The sequence is that of Small ribosomal subunit protein uS2 from Parasynechococcus marenigrum (strain WH8102).